A 104-amino-acid polypeptide reads, in one-letter code: Nucleoid-associated protein LSL_1227 (104 aa).

The segment covering 1–19 (MMMRGMNMQSMMKQMQKLQ) has biased composition (low complexity). Residues 1-24 (MMMRGMNMQSMMKQMQKLQKNMKK) are disordered.

It belongs to the YbaB/EbfC family. Homodimer.

Its subcellular location is the cytoplasm. It is found in the nucleoid. Its function is as follows. Binds to DNA and alters its conformation. May be involved in regulation of gene expression, nucleoid organization and DNA protection. The chain is Nucleoid-associated protein LSL_1227 from Ligilactobacillus salivarius (strain UCC118) (Lactobacillus salivarius).